The chain runs to 317 residues: MALTELRIASRRSQLAMVQTNWVKAELEKAHPGLTITVEAMATQGDKILDVALAKIGDKGLFTKELEAQMLVGRADIAVHSLKDLPTNLPEGLMLGCITEREDPADALVLHAKNKHLNLATLPEGAVVGTSSLRRLAQLRHHYPHLEFKDVRGNVITRLEKLDSGAYDCLILAAAGLGRLGFADRIDQSIPGDISLHAVGQGALGIECVENQPDVMEIIKVLEHGPTSQRCLAERAFLRELEGGCQVPIGVNTRFEGDQLILTGMVASLDGKRLIREQASGPSTDPESIGLELAATLKGLGAGEILKEIFDAVRPEA.

C245 is subject to S-(dipyrrolylmethanemethyl)cysteine.

Belongs to the HMBS family. In terms of assembly, monomer. It depends on dipyrromethane as a cofactor.

The enzyme catalyses 4 porphobilinogen + H2O = hydroxymethylbilane + 4 NH4(+). The protein operates within porphyrin-containing compound metabolism; protoporphyrin-IX biosynthesis; coproporphyrinogen-III from 5-aminolevulinate: step 2/4. It functions in the pathway porphyrin-containing compound metabolism; chlorophyll biosynthesis. Its function is as follows. Tetrapolymerization of the monopyrrole PBG into the hydroxymethylbilane pre-uroporphyrinogen in several discrete steps. The polypeptide is Porphobilinogen deaminase (Synechococcus sp. (strain CC9902)).